The chain runs to 676 residues: MTYEGAIGIDLGTTYSCVGVWQNERVEIIANDQGNRTTPSYVAFVNNEVLVGDAAKSHAARGSNGVIFDAKRLIGRKFSDSVVQSDMKHWPFKVEEGEKGGAVMRVEHLGEGMLLQPEQISARVLAYLKSCAESYLGKQVAKAVVTVPAYFNDSQRQATKDAGTIAGLEVLRIINEPTAAAIAYGLDKADEGKERNVLVFDFGGGTFDVSIISVSGGVFEVKATNGDTHLGGEDVDAALLEHALADIRNRYGIEQGSLSQKMLSKLRSRCEEVKRVLSHSTVGEIALDGLLPDGEEYVLKLTRARLEELCTKIFARCLSVVQRALKDASMKVEDIEDVVLVGGSSRIPAVQAQLRELFRGKQLCSSVHPDEAVAYGAAWQAHVLSGGYGESSRTAGIVLLDVVPLSIGVEVDDGKFDVIIRRNTTIPYLATKEYSTVDDNQSEVEIQVFEGERPLTRHNHRLGSFVLDGITPAKHGEPTITVTFSVDADGILTVTAAEELGSVTKTLVVENSERLTSEEVQKMIEVAQKFALTDATALARMEATERLTQWFDRLEAVMETVPQPYSEKLQKRIAFLPHGKEWVGTQLHTYTDAASIEAKVAKIERLAKRALKSARREGKDGWAPGNEDNGSGDDNDGDDNSDEEDELQRGRGVTEGSGRSPIRKRDRIEAINANTE.

Residues 613–676 (SARREGKDGW…RIEAINANTE (64 aa)) form a disordered region. The segment covering 630 to 646 (GSGDDNDGDDNSDEEDE) has biased composition (acidic residues).

Belongs to the heat shock protein 70 family.

In Trypanosoma brucei brucei, this protein is Heat shock cognate HSP70 protein.